The primary structure comprises 500 residues: Hexokinase-3 (500 aa).

Residues Val-4–Val-24 form a helical membrane-spanning segment. One can recognise a Hexokinase domain in the interval Arg-35–Ala-487. The tract at residues Ser-90–Val-222 is hexokinase small subdomain. ADP-binding residues include Gly-104, Thr-105, and Asn-106. D-glucose contacts are provided by Thr-188, Lys-189, Asn-223, and Asp-224. The segment at Asn-223–Asp-476 is hexokinase large subdomain. Ser-247 serves as a coordination point for ADP. Positions 250, 278, and 309 each coordinate D-glucose. Position 441 (Gly-441) interacts with ADP.

It belongs to the hexokinase family. Expressed in roots, leaves, flowers, immature seeds and seed coat. Expressed in young shoots, tiller buds, endosperm seven days after fertilization, and interconnecting tissues such as pulvini and nodes.

Its subcellular location is the mitochondrion outer membrane. The enzyme catalyses a D-hexose + ATP = a D-hexose 6-phosphate + ADP + H(+). It catalyses the reaction D-fructose + ATP = D-fructose 6-phosphate + ADP + H(+). It carries out the reaction D-glucose + ATP = D-glucose 6-phosphate + ADP + H(+). The protein operates within carbohydrate metabolism; hexose metabolism. It participates in carbohydrate degradation; glycolysis; D-glyceraldehyde 3-phosphate and glycerone phosphate from D-glucose: step 1/4. Functionally, fructose and glucose phosphorylating enzyme. Involved in the regulation of cell expansion in spikelet hulls, grain size, and gibberellin biosynthesis and homeostasis. The sequence is that of Hexokinase-3 from Oryza sativa subsp. japonica (Rice).